The following is a 157-amino-acid chain: S-ribosylhomocysteine lyase (157 aa).

3 residues coordinate Fe cation: His54, His58, and Cys124.

The protein belongs to the LuxS family. In terms of assembly, homodimer. Fe cation serves as cofactor.

The catalysed reaction is S-(5-deoxy-D-ribos-5-yl)-L-homocysteine = (S)-4,5-dihydroxypentane-2,3-dione + L-homocysteine. In terms of biological role, involved in the synthesis of autoinducer 2 (AI-2) which is secreted by bacteria and is used to communicate both the cell density and the metabolic potential of the environment. The regulation of gene expression in response to changes in cell density is called quorum sensing. Catalyzes the transformation of S-ribosylhomocysteine (RHC) to homocysteine (HC) and 4,5-dihydroxy-2,3-pentadione (DPD). The protein is S-ribosylhomocysteine lyase of Pediococcus pentosaceus (strain ATCC 25745 / CCUG 21536 / LMG 10740 / 183-1w).